Consider the following 353-residue polypeptide: Photosystem II D2 protein (353 aa).

The chain crosses the membrane as a helical span at residues 41–61; it reads TAYLALGGWLTGTTFVTSWYT. Position 118 (H118) interacts with chlorophyll a. The helical transmembrane segment at 125-141 threads the bilayer; sequence GFMLRQFEISRLVGIRP. Residues Q130 and N143 each contribute to the pheophytin a site. Residues 153–166 form a helical membrane-spanning segment; it reads VFVSVFLMYPLGQS. Chlorophyll a is bound at residue H198. The chain crosses the membrane as a helical span at residues 208 to 228; that stretch reads GALLCAIHGATVENTLYEDGE. A plastoquinone contacts are provided by H215 and F262. Fe cation is bound at residue H215. H269 provides a ligand contact to Fe cation. The chain crosses the membrane as a helical span at residues 279 to 295; sequence GLWTSSIGIIGLALNLR.

This sequence belongs to the reaction center PufL/M/PsbA/D family. In terms of assembly, PSII is composed of 1 copy each of membrane proteins PsbA, PsbB, PsbC, PsbD, PsbE, PsbF, PsbH, PsbI, PsbJ, PsbK, PsbL, PsbM, PsbT, PsbX, PsbY, PsbZ, Psb30/Ycf12, peripheral proteins PsbO, CyanoQ (PsbQ), PsbU, PsbV and a large number of cofactors. It forms dimeric complexes. The cofactor is The D1/D2 heterodimer binds P680, chlorophylls that are the primary electron donor of PSII, and subsequent electron acceptors. It shares a non-heme iron and each subunit binds pheophytin, quinone, additional chlorophylls, carotenoids and lipids. There is also a Cl(-1) ion associated with D1 and D2, which is required for oxygen evolution. The PSII complex binds additional chlorophylls, carotenoids and specific lipids..

Its subcellular location is the host cellular thylakoid membrane. The catalysed reaction is 2 a plastoquinone + 4 hnu + 2 H2O = 2 a plastoquinol + O2. Photosystem II (PSII) is a light-driven water:plastoquinone oxidoreductase that uses light energy to abstract electrons from H(2)O, generating O(2) and a proton gradient subsequently used for ATP formation. It consists of a core antenna complex that captures photons, and an electron transfer chain that converts photonic excitation into a charge separation. The D1/D2 (PsbA/PsbD) reaction center heterodimer binds P680, the primary electron donor of PSII as well as several subsequent electron acceptors. D2 is needed for assembly of a stable PSII complex. This is Photosystem II D2 protein (psbD) from Synechococcus phage S-PM2.